The following is a 98-amino-acid chain: Integration host factor subunit alpha (98 aa).

The segment at 52-71 is disordered; it reads FDLRDKNQRPGRNPKTGEDI.

The protein belongs to the bacterial histone-like protein family. As to quaternary structure, heterodimer of an alpha and a beta chain.

This protein is one of the two subunits of integration host factor, a specific DNA-binding protein that functions in genetic recombination as well as in transcriptional and translational control. This is Integration host factor subunit alpha from Photorhabdus laumondii subsp. laumondii (strain DSM 15139 / CIP 105565 / TT01) (Photorhabdus luminescens subsp. laumondii).